Consider the following 252-residue polypeptide: F-box/SPRY domain-containing protein 1 (252 aa).

Residues 1 to 48 (MVDPLCNYNVLEAIFSYLELSDLSRCSQVCKSWYHFLNDENSDVWRWH) enclose the F-box domain. In terms of domain architecture, B30.2/SPRY spans 58–250 (IKSDLLASVT…VSMVYLGTPL (193 aa)).

It belongs to the FBXO45/Fsn family. Component of an E3 ubiquitin ligase complex composed of hiw and Fsn.

It localises to the synapse. The protein operates within protein modification; protein ubiquitination. Functionally, required in the presynaptic motoneuron to down-regulate the levels of wnd and restrain synaptic terminal growth at the neuromuscular junction (NMJ). In Drosophila mojavensis (Fruit fly), this protein is F-box/SPRY domain-containing protein 1.